We begin with the raw amino-acid sequence, 163 residues long: Nucleotide-binding protein C8J_0350 (163 aa).

Belongs to the YajQ family.

Nucleotide-binding protein. This Campylobacter jejuni subsp. jejuni serotype O:6 (strain 81116 / NCTC 11828) protein is Nucleotide-binding protein C8J_0350.